The primary structure comprises 562 residues: Arginine--tRNA ligase (562 aa).

A 'HIGH' region motif is present at residues 121-131 (PNIAKPFSVGH).

Belongs to the class-I aminoacyl-tRNA synthetase family. As to quaternary structure, monomer.

It localises to the cytoplasm. The enzyme catalyses tRNA(Arg) + L-arginine + ATP = L-arginyl-tRNA(Arg) + AMP + diphosphate. The polypeptide is Arginine--tRNA ligase (Streptococcus uberis (strain ATCC BAA-854 / 0140J)).